A 946-amino-acid polypeptide reads, in one-letter code: Isoleucine--tRNA ligase (946 aa).

The 'HIGH' region motif lies at 58–68 (PYANGSIHIGH). Glu-568 contacts L-isoleucyl-5'-AMP. The 'KMSKS' region motif lies at 609–613 (KMSKS). Residue Lys-612 coordinates ATP. Residues Cys-908, Cys-911, Cys-928, and Cys-931 each contribute to the Zn(2+) site.

It belongs to the class-I aminoacyl-tRNA synthetase family. IleS type 1 subfamily. Monomer. Zn(2+) serves as cofactor.

The protein resides in the cytoplasm. It catalyses the reaction tRNA(Ile) + L-isoleucine + ATP = L-isoleucyl-tRNA(Ile) + AMP + diphosphate. Its function is as follows. Catalyzes the attachment of isoleucine to tRNA(Ile). As IleRS can inadvertently accommodate and process structurally similar amino acids such as valine, to avoid such errors it has two additional distinct tRNA(Ile)-dependent editing activities. One activity is designated as 'pretransfer' editing and involves the hydrolysis of activated Val-AMP. The other activity is designated 'posttransfer' editing and involves deacylation of mischarged Val-tRNA(Ile). The protein is Isoleucine--tRNA ligase of Chromohalobacter salexigens (strain ATCC BAA-138 / DSM 3043 / CIP 106854 / NCIMB 13768 / 1H11).